A 490-amino-acid chain; its full sequence is Mitochondrial-processing peptidase subunit beta (490 aa).

Residues 1–46 (MAAAAVARAVLFSAARRRLCGFTERLLIGGAAGRSLYFGGNRLRST) constitute a mitochondrion transit peptide. His102 provides a ligand contact to Zn(2+). Glu105 acts as the Proton acceptor in catalysis. Zn(2+) is bound by residues His106 and Glu182.

This sequence belongs to the peptidase M16 family. Heterodimer of PMPCA (alpha) and PMPCB (beta) subunits, forming the mitochondrial processing protease (MPP) in which PMPCA is involved in substrate recognition and binding and PMPCB is the catalytic subunit. The cofactor is Zn(2+).

Its subcellular location is the mitochondrion matrix. It catalyses the reaction Release of N-terminal transit peptides from precursor proteins imported into the mitochondrion, typically with Arg in position P2.. Binding to PMPCA is required for catalytic activity. Its function is as follows. Catalytic subunit of the essential mitochondrial processing protease (MPP), which cleaves the mitochondrial sequence off newly imported precursors proteins. Preferentially, cleaves after an arginine at position P2. Required for PINK1 turnover by coupling PINK1 mitochondrial import and cleavage, which results in subsequent PINK1 proteolysis. This Bos taurus (Bovine) protein is Mitochondrial-processing peptidase subunit beta (PMPCB).